The primary structure comprises 311 residues: HPr kinase/phosphorylase (311 aa).

Residues histidine 139 and lysine 160 contribute to the active site. Position 154-161 (154-161 (GESGVGKS)) interacts with ATP. Serine 161 serves as a coordination point for Mg(2+). Aspartate 178 functions as the Proton acceptor; for phosphorylation activity. Proton donor; for dephosphorylation activity in the catalytic mechanism. Residues 202–211 (IEIRGIGILD) are important for the catalytic mechanism of both phosphorylation and dephosphorylation. A Mg(2+)-binding site is contributed by glutamate 203. Residue arginine 244 is part of the active site. The segment at 265–270 (PVRPGR) is important for the catalytic mechanism of dephosphorylation.

This sequence belongs to the HPrK/P family. Homohexamer. The cofactor is Mg(2+).

The catalysed reaction is [HPr protein]-L-serine + ATP = [HPr protein]-O-phospho-L-serine + ADP + H(+). The enzyme catalyses [HPr protein]-O-phospho-L-serine + phosphate + H(+) = [HPr protein]-L-serine + diphosphate. Functionally, catalyzes the ATP- as well as the pyrophosphate-dependent phosphorylation of a specific serine residue in HPr, a phosphocarrier protein of the phosphoenolpyruvate-dependent sugar phosphotransferase system (PTS). HprK/P also catalyzes the pyrophosphate-producing, inorganic phosphate-dependent dephosphorylation (phosphorolysis) of seryl-phosphorylated HPr (P-Ser-HPr). The two antagonistic activities of HprK/P are regulated by several intracellular metabolites, which change their concentration in response to the absence or presence of rapidly metabolisable carbon sources (glucose, fructose, etc.) in the growth medium. Therefore, by controlling the phosphorylation state of HPr, HPrK/P is a sensor enzyme that plays a major role in the regulation of carbon metabolism and sugar transport: it mediates carbon catabolite repression (CCR), and regulates PTS-catalyzed carbohydrate uptake and inducer exclusion. The chain is HPr kinase/phosphorylase from Caldicellulosiruptor bescii (strain ATCC BAA-1888 / DSM 6725 / KCTC 15123 / Z-1320) (Anaerocellum thermophilum).